Here is a 229-residue protein sequence, read N- to C-terminus: Flagellar L-ring protein (229 aa).

The N-terminal stretch at 1–25 (MKQVRLPSSATVRAACAVAVAALAG) is a signal peptide. A lipid anchor (N-palmitoyl cysteine) is attached at cysteine 26. The S-diacylglycerol cysteine moiety is linked to residue cysteine 26.

It belongs to the FlgH family. The basal body constitutes a major portion of the flagellar organelle and consists of four rings (L,P,S, and M) mounted on a central rod.

The protein resides in the cell outer membrane. It is found in the bacterial flagellum basal body. In terms of biological role, assembles around the rod to form the L-ring and probably protects the motor/basal body from shearing forces during rotation. The sequence is that of Flagellar L-ring protein from Burkholderia orbicola (strain AU 1054).